A 2625-amino-acid chain; its full sequence is Highly reducing polyketide synthase frbB (2625 aa).

The segment covering 1 to 10 has biased composition (basic and acidic residues); sequence MRNIDEHMSE. Residues 1-25 are disordered; that stretch reads MRNIDEHMSERATLQSSGGYGERDS. In terms of domain architecture, Ketosynthase family 3 (KS3) spans 27-449; it reads VEPIAIIGMS…GTNAHVILDR (423 aa). Catalysis depends on for beta-ketoacyl synthase activity residues C200, H334, and H375. The tract at residues 563-883 is malonyl-CoA:ACP transacylase (MAT) domain; it reads YVFSGQGAQY…DAASTLLTTI (321 aa). The tract at residues 942 to 1080 is N-terminal hotdog fold; it reads HELLGNMSTD…GRIRAVLDDS (139 aa). Residues 942–1252 are dehydratase (DH) domain; sequence HELLGNMSTD…GMILAKLPGG (311 aa). The PKS/mFAS DH domain occupies 942–1255; that stretch reads HELLGNMSTD…LAKLPGGTSR (314 aa). Residue H974 is the Proton acceptor; for dehydratase activity of the active site. Residues 1102–1255 are C-terminal hotdog fold; that stretch reads VRFVSPSAFY…LAKLPGGTSR (154 aa). Residue D1167 is the Proton donor; for dehydratase activity of the active site. The tract at residues 1490-1673 is methyltransferase (CMet) domain; the sequence is YHQIKAYIAE…GFVDTEPVFR (184 aa). Residues 1907-2220 are enoyl reductase (ER) domain; it reads GLLETFHWKP…SGKHIGKVIL (314 aa). Residues 2261–2439 form a ketoreductase (KR) domain region; the sequence is AVYIVVGGLG…GYSINIGPVS (179 aa). Residues 2542–2619 enclose the Carrier domain; it reads GAEAAVLTAI…HLARLAAEES (78 aa). S2579 carries the O-(pantetheine 4'-phosphoryl)serine modification.

It participates in antifungal biosynthesis. Highly reducing polyketide synthase; part of the gene cluster that mediates the biosynthesis of the antifungal antibiotic FR901469, an inhibitor of beta-1,3-glucansynthase, exerting antifungal activity against the pathogenes Candida albicans and Aspergillus fumigatus. FR901469 is a cyclic depsipeptide containing 12 amino acid residues and a fatty acid chain. The NRPS frbI contains 12 modules responsible for the formation of the depsipeptide backbone which is denoted as Acyl-Thr-Ala-Tyr-Val-4OHPro-Thr-Thr-3OHPro-threo3OHGln-Gly-Thr-Orn-OH (C71H116N14O23). The PKS frbB is probably involved in the production of the hydrocarbon chain, and the acyl-CoA ligase frbC might be involved in the transport of the chain to the peptide ptoduct of frbI. Because FR901469 contains 3 hydroxylated amino acid residues, the 3 oxygenases frbA, frbH, and frbJ might be participating in amino acid hydroxylation. As no thioesterase domains were detected in frbI or frbB, the thioesterases frbD and frbE may instead release and cyclize the products of the NRPS and PKS, respectively. This is Highly reducing polyketide synthase frbB from Dothideomycetidae sp. (strain 11243) (Fungal sp. (strain No.11243)).